The sequence spans 454 residues: Phosphoglucosamine mutase (454 aa).

Ser101 (phosphoserine intermediate) is an active-site residue. The Mg(2+) site is built by Ser101, Asp243, Asp245, and Asp247. Residue Ser101 is modified to Phosphoserine.

The protein belongs to the phosphohexose mutase family. Mg(2+) is required as a cofactor. In terms of processing, activated by phosphorylation.

It catalyses the reaction alpha-D-glucosamine 1-phosphate = D-glucosamine 6-phosphate. Functionally, catalyzes the conversion of glucosamine-6-phosphate to glucosamine-1-phosphate. The polypeptide is Phosphoglucosamine mutase (Geotalea daltonii (strain DSM 22248 / JCM 15807 / FRC-32) (Geobacter daltonii)).